The primary structure comprises 122 residues: Flagellar protein FliT (122 aa).

The required for homodimerization stretch occupies residues 1–50 (MTSTVEFINRWQRIALLSQSLLELAQRGEWELLLQQEVSYLQSIETVMEK). A fliD binding region spans residues 60-98 (IQDMVAGYIKQTLDNEQRLKGLLQQRLDELSGLIGQSTR).

It belongs to the FliT family. In terms of assembly, homodimer. Interacts with FliD and FlhC.

The protein resides in the cytoplasm. It is found in the cytosol. Its function is as follows. Dual-function protein that regulates the transcription of class 2 flagellar operons and that also acts as an export chaperone for the filament-capping protein FliD. As a transcriptional regulator, acts as an anti-FlhDC factor; it directly binds FlhC, thus inhibiting the binding of the FlhC/FlhD complex to class 2 promoters, resulting in decreased expression of class 2 flagellar operons. As a chaperone, effects FliD transition to the membrane by preventing its premature polymerization, and by directing it to the export apparatus. The protein is Flagellar protein FliT of Salmonella arizonae (strain ATCC BAA-731 / CDC346-86 / RSK2980).